The sequence spans 354 residues: Rhodopsin (354 aa).

Over 1 to 36 the chain is Extracellular; it reads MNGTEGENFYIPMSNKTGVVRSPFDYPQYYLAEPWK. Asn-2 and Asn-15 each carry an N-linked (GlcNAc...) asparagine glycan. A helical membrane pass occupies residues 37–61; that stretch reads FSVLAAYMFFLIIAGFPVNFLTLYV. The Cytoplasmic segment spans residues 62 to 73; it reads TIQHKKLRQPLN. A helical membrane pass occupies residues 74-96; it reads YILLNLAVADLFMIFGGFPSTMI. Residues 97–110 are Extracellular-facing; the sequence is TSMNGYFVFGPSGC. A disulfide bridge links Cys-110 with Cys-187. Residues 111–133 traverse the membrane as a helical segment; the sequence is NFEGFFATLGGEIGLWSLVVLAI. A 'Ionic lock' involved in activated form stabilization motif is present at residues 134–136; it reads ERY. Residues 134 to 152 are Cytoplasmic-facing; that stretch reads ERYVVVCKPMSNFRFGSQH. Residues 153–173 traverse the membrane as a helical segment; that stretch reads AFMGVGLTWIMAMACAFPPLV. Residues 174–202 are Extracellular-facing; that stretch reads GWSRYIPEGMQCSCGIDYYTLKPEVNNES. Asn-200 is a glycosylation site (N-linked (GlcNAc...) asparagine). The helical transmembrane segment at 203–224 threads the bilayer; sequence FVIYMFVVHFSIPLTIIFFCYG. The Cytoplasmic portion of the chain corresponds to 225-252; the sequence is RLVCTVKEAAAQQQESETTQRAEREVTR. A helical transmembrane segment spans residues 253 to 274; it reads MVIIMVIAFLICWLPYASVAFF. At 275 to 286 the chain is on the extracellular side; sequence IFCNQGSEFGPI. A helical membrane pass occupies residues 287–308; sequence FMTIPAFFAKAASLYNPLIYIL. At Lys-296 the chain carries N6-(retinylidene)lysine. Over 309–354 the chain is Cytoplasmic; that stretch reads MNKQFRNCMITTICCGKNPFEEEESTSASASKTEASSVSSSQVAPA. S-palmitoyl cysteine attachment occurs at residues Cys-322 and Cys-323. Residues 333 to 354 are disordered; it reads STSASASKTEASSVSSSQVAPA. The segment covering 334 to 354 has biased composition (low complexity); the sequence is TSASASKTEASSVSSSQVAPA.

Belongs to the G-protein coupled receptor 1 family. Opsin subfamily. Post-translationally, phosphorylated on some or all of the serine and threonine residues present in the C-terminal region. Contains one covalently linked retinal chromophore.

Its subcellular location is the membrane. The protein resides in the cell projection. It localises to the cilium. It is found in the photoreceptor outer segment. Its function is as follows. Photoreceptor required for image-forming vision at low light intensity. While most salt water fish species use retinal as chromophore, most freshwater fish use 3-dehydroretinal, or a mixture of retinal and 3-dehydroretinal. Light-induced isomerization of 11-cis to all-trans retinal triggers a conformational change that activates signaling via G-proteins. Subsequent receptor phosphorylation mediates displacement of the bound G-protein alpha subunit by arrestin and terminates signaling. The chain is Rhodopsin (rho) from Scyliorhinus canicula (Small-spotted catshark).